Reading from the N-terminus, the 231-residue chain is Large ribosomal subunit protein uL1 (231 aa).

Belongs to the universal ribosomal protein uL1 family. In terms of assembly, part of the 50S ribosomal subunit.

Its function is as follows. Binds directly to 23S rRNA. The L1 stalk is quite mobile in the ribosome, and is involved in E site tRNA release. Protein L1 is also a translational repressor protein, it controls the translation of the L11 operon by binding to its mRNA. The polypeptide is Large ribosomal subunit protein uL1 (Ralstonia pickettii (strain 12J)).